Reading from the N-terminus, the 240-residue chain is Octanoyltransferase (240 aa).

One can recognise a BPL/LPL catalytic domain in the interval 49–233; it reads GEAPELVWLL…AFESVFGATR (185 aa). Substrate-binding positions include 87-94, 162-164, and 175-177; these read RGGQVTYH, AIG, and GIA. Cys-193 (acyl-thioester intermediate) is an active-site residue.

This sequence belongs to the LipB family.

The protein resides in the cytoplasm. It catalyses the reaction octanoyl-[ACP] + L-lysyl-[protein] = N(6)-octanoyl-L-lysyl-[protein] + holo-[ACP] + H(+). Its pathway is protein modification; protein lipoylation via endogenous pathway; protein N(6)-(lipoyl)lysine from octanoyl-[acyl-carrier-protein]: step 1/2. In terms of biological role, catalyzes the transfer of endogenously produced octanoic acid from octanoyl-acyl-carrier-protein onto the lipoyl domains of lipoate-dependent enzymes. Lipoyl-ACP can also act as a substrate although octanoyl-ACP is likely to be the physiological substrate. In Bradyrhizobium sp. (strain BTAi1 / ATCC BAA-1182), this protein is Octanoyltransferase.